The sequence spans 490 residues: Betaine aldehyde dehydrogenase (490 aa).

Residues Ile-27 and Asp-93 each coordinate K(+). 150–152 lines the NAD(+) pocket; that stretch reads GAW. The active-site Charge relay system is Lys-162. 176-179 is an NAD(+) binding site; sequence KPSE. Residue Val-180 coordinates K(+). Residue 230 to 233 participates in NAD(+) binding; the sequence is GTTT. K(+) is bound at residue Leu-246. The active-site Proton acceptor is Glu-252. 3 residues coordinate NAD(+): Gly-254, Cys-286, and Glu-387. Cys-286 acts as the Nucleophile in catalysis. Position 286 is a cysteine sulfenic acid (-SOH) (Cys-286). Residues Lys-457 and Gly-460 each contribute to the K(+) site. The active-site Charge relay system is the Glu-464.

It belongs to the aldehyde dehydrogenase family. Dimer of dimers. It depends on K(+) as a cofactor.

It carries out the reaction betaine aldehyde + NAD(+) + H2O = glycine betaine + NADH + 2 H(+). The protein operates within amine and polyamine biosynthesis; betaine biosynthesis via choline pathway; betaine from betaine aldehyde: step 1/1. Its function is as follows. Involved in the biosynthesis of the osmoprotectant glycine betaine. Catalyzes the irreversible oxidation of betaine aldehyde to the corresponding acid. The protein is Betaine aldehyde dehydrogenase of Pseudomonas putida (strain W619).